The primary structure comprises 276 residues: Nuclear egress protein 2 (276 aa).

At 1-253 the chain is on the perinuclear space side; that stretch reads MAGMGKPYGG…LFRAPRPGPP (253 aa). The segment covering 212–225 has biased composition (low complexity); that stretch reads HSSGAPGPGVAASG. The interval 212–237 is disordered; that stretch reads HSSGAPGPGVAASGPPAPPGRGPARP. Residues 254 to 274 traverse the membrane as a helical segment; that stretch reads ALLLLAAGLFLGAAIWWAVGA. Residues 275 to 276 lie on the Nuclear side of the membrane; it reads RL.

It belongs to the herpesviridae NEC2 protein family. Forms a heterohexameric complex with NEC1. Phosphorylated.

It is found in the host nucleus inner membrane. In terms of biological role, plays an essential role in virion nuclear egress, the first step of virion release from infected cell. Within the host nucleus, NEC1 interacts with the newly formed capsid through the vertexes and directs it to the inner nuclear membrane by associating with NEC2. Induces the budding of the capsid at the inner nuclear membrane as well as its envelopment into the perinuclear space. There, the NEC1/NEC2 complex promotes the fusion of the enveloped capsid with the outer nuclear membrane and the subsequent release of the viral capsid into the cytoplasm where it will reach the secondary budding sites in the host Golgi or trans-Golgi network. The sequence is that of Nuclear egress protein 2 from Homo sapiens (Human).